The chain runs to 138 residues: Protein Rrf1 (138 aa).

The Response regulatory domain occupies 4–116; the sequence is RILVVQEDPD…LLLALVDRAL (113 aa). 4-aspartylphosphate occurs at positions 13 and 53.

Functionally, may be involved in regulation of gene transcription. Belongs to the family of response regulators, and members of this family involved in the regulation of gene transcription are two-domain proteins. This protein contains only the N-terminal phosphorylation domain and not the C-terminal DNA-binding domain but it may bind to Rrf2 protein and the latter may bind to DNA. The sequence is that of Protein Rrf1 (rrf1) from Nitratidesulfovibrio vulgaris (strain ATCC 29579 / DSM 644 / CCUG 34227 / NCIMB 8303 / VKM B-1760 / Hildenborough) (Desulfovibrio vulgaris).